The chain runs to 518 residues: Coiled-coil domain-containing protein 82 (518 aa).

Residues 1-14 (MVHVRRHETRKNSK) are compositionally biased toward basic residues. A disordered region spans residues 1 to 266 (MVHVRRHETR…EDDYRYDEDG (266 aa)). Residues 16–27 (QKPEQKSRVDWH) show a composition bias toward basic and acidic residues. Positions 38 to 67 (DSDEELDSNEELDSDEEHDSGESIDSDEEL) are enriched in acidic residues. Basic and acidic residues predominate over residues 68-89 (DISKKSDINELPEKETELKLIK). Residues 92 to 107 (SQGSNSKHLTNTSNSS) are compositionally biased toward polar residues. Basic and acidic residues predominate over residues 111-127 (EQLKETKHNDLPDDEAH). A phosphoserine mark is found at Ser-170 and Ser-194. Over residues 191 to 201 (DECSSLEMEQE) the composition is skewed to acidic residues. Thr-202 carries the post-translational modification Phosphothreonine. Positions 204–232 (EKSSAARKREYHQKLQELSERSRQRRRRN) form a coiled coil. Residues 215-225 (HQKLQELSERS) show a composition bias toward basic and acidic residues. The span at 249–266 (GEEDEDEDEDDYRYDEDG) shows a compositional bias: acidic residues. Phosphoserine is present on Ser-305.

This is Coiled-coil domain-containing protein 82 (Ccdc82) from Mus musculus (Mouse).